Here is a 346-residue protein sequence, read N- to C-terminus: Fe(3+) ions import ATP-binding protein FbpC 3 (346 aa).

An ABC transporter domain is found at 5-235 (LEVDGVDKSF…PIDVATAEFI (231 aa)). 37-44 (GPSGCGKT) is a binding site for ATP.

Belongs to the ABC transporter superfamily. Fe(3+) ion importer (TC 3.A.1.10) family. As to quaternary structure, the complex is composed of two ATP-binding proteins (FbpC), two transmembrane proteins (FbpB) and a solute-binding protein (FbpA).

Its subcellular location is the cell membrane. The catalysed reaction is Fe(3+)(out) + ATP + H2O = Fe(3+)(in) + ADP + phosphate + H(+). Part of the ABC transporter complex FbpABC involved in Fe(3+) ions import. Responsible for energy coupling to the transport system. The chain is Fe(3+) ions import ATP-binding protein FbpC 3 from Rhodococcus jostii (strain RHA1).